A 932-amino-acid chain; its full sequence is Protein translocase subunit SecA (932 aa).

Residues Gln83, 101-105 (GEGKT), and Asp491 contribute to the ATP site.

The protein belongs to the SecA family. In terms of assembly, monomer and homodimer. Part of the essential Sec protein translocation apparatus which comprises SecA, SecYEG and auxiliary proteins SecDF. Other proteins may also be involved.

It is found in the cell inner membrane. Its subcellular location is the cellular thylakoid membrane. It localises to the cytoplasm. It catalyses the reaction ATP + H2O + cellular proteinSide 1 = ADP + phosphate + cellular proteinSide 2.. In terms of biological role, part of the Sec protein translocase complex. Interacts with the SecYEG preprotein conducting channel. Has a central role in coupling the hydrolysis of ATP to the transfer of proteins into and across the cell membrane, serving as an ATP-driven molecular motor driving the stepwise translocation of polypeptide chains across the membrane. Functionally, probably participates in protein translocation into and across both the cytoplasmic and thylakoid membranes in cyanobacterial cells. The protein is Protein translocase subunit SecA of Cyanothece sp. (strain PCC 7425 / ATCC 29141).